Here is a 20-residue protein sequence, read N- to C-terminus: Neurotoxin BmK 18(2) (20 aa).

The LCN-type CS-alpha/beta domain occupies 2–20 (RDAYIAEDYDCVYHCARDA).

It belongs to the long (4 C-C) scorpion toxin superfamily. Sodium channel inhibitor family. Alpha subfamily. In terms of tissue distribution, expressed by the venom gland.

Its subcellular location is the secreted. Functionally, binds to sodium channels (Nav) and inhibits the inactivation of the activated channels, thereby blocking neuronal transmission. This chain is Neurotoxin BmK 18(2), found in Olivierus martensii (Manchurian scorpion).